We begin with the raw amino-acid sequence, 268 residues long: Diaminopimelate epimerase (268 aa).

Substrate is bound by residues N13, Q46, and N64. C73 serves as the catalytic Proton donor. Residues 74–75 (GN), N148, N181, and 199–200 (ER) contribute to the substrate site. The active-site Proton acceptor is C208. Position 209–210 (209–210 (GT)) interacts with substrate.

Belongs to the diaminopimelate epimerase family. As to quaternary structure, homodimer.

It localises to the cytoplasm. The catalysed reaction is (2S,6S)-2,6-diaminopimelate = meso-2,6-diaminopimelate. The protein operates within amino-acid biosynthesis; L-lysine biosynthesis via DAP pathway; DL-2,6-diaminopimelate from LL-2,6-diaminopimelate: step 1/1. In terms of biological role, catalyzes the stereoinversion of LL-2,6-diaminopimelate (L,L-DAP) to meso-diaminopimelate (meso-DAP), a precursor of L-lysine and an essential component of the bacterial peptidoglycan. The chain is Diaminopimelate epimerase from Sphingopyxis alaskensis (strain DSM 13593 / LMG 18877 / RB2256) (Sphingomonas alaskensis).